Reading from the N-terminus, the 398-residue chain is MSEEDDHWNLVRLRRLRKGREGEEQSSKSEISLDSLHESSFAGEDDEDFDADVLSNTSSEESAQMNRIYDFRTSNEFSNAGVNIDQTGVPTISESFDTLSGSNVGGTVLPSMEGSKLKDSTIRNSSTLSDHIIDKSEGKSAKLKMWHVIMLSSLLSMTFSYLALEYSLTGDVLAGFKSQQSLRNNERKLLYGNIDFVDKKSYDSSSDSLSQWAPSGKYYVDFDNHIAYPLKDDDLMGWRRYKTDLVILWYTTKARMKDGWHKRINKINGGRIKLHLFLKNSFKSAQESLRVLHKEQKRRWKRLFVLLHNKYRQFSPHIKRYFDHSCQKAKQCWSGSRLQLRKLRFKSMKPFRVFQFKVRKDTNWFVKQLKRFGLKLQHSRMYKAMSECRKKNYFKCKH.

An ATG8-binding motif is present at residues 8–11; it reads WNLV. Residues 15–50 form a disordered region; sequence RLRKGREGEEQSSKSEISLDSLHESSFAGEDDEDFD. The ATG11-binding motif lies at 52–59; the sequence is DVLSNTSS. The helical transmembrane segment at 148 to 164 threads the bilayer; it reads VIMLSSLLSMTFSYLAL.

Interacts with ATG8 and ATG11.

It is found in the endoplasmic reticulum membrane. It localises to the preautophagosomal structure membrane. Its function is as follows. Acts as a receptor for reticulophagy and nucleophagy. Directs autophagic sequestration of double-membrane vesicles derived from the nuclear envelope and perinuclear endoplasmic reticulum (pnER) into autophagosomes. Is not required for the cytoplasm-to-vacuole targeting pathway, mitophagy, pexophagy, and non-selective autophagy. In Saccharomyces cerevisiae (strain ATCC 204508 / S288c) (Baker's yeast), this protein is Autophagy-related protein 39.